The sequence spans 344 residues: Phenylalanine--tRNA ligase alpha subunit (344 aa).

Position 256 (E256) interacts with Mg(2+).

The protein belongs to the class-II aminoacyl-tRNA synthetase family. Phe-tRNA synthetase alpha subunit type 1 subfamily. In terms of assembly, tetramer of two alpha and two beta subunits. Requires Mg(2+) as cofactor.

Its subcellular location is the cytoplasm. The enzyme catalyses tRNA(Phe) + L-phenylalanine + ATP = L-phenylalanyl-tRNA(Phe) + AMP + diphosphate + H(+). In Geobacillus thermodenitrificans (strain NG80-2), this protein is Phenylalanine--tRNA ligase alpha subunit.